A 368-amino-acid polypeptide reads, in one-letter code: Cobalt-precorrin-5B C(1)-methyltransferase (368 aa).

This sequence belongs to the CbiD family.

The enzyme catalyses Co-precorrin-5B + S-adenosyl-L-methionine = Co-precorrin-6A + S-adenosyl-L-homocysteine. It functions in the pathway cofactor biosynthesis; adenosylcobalamin biosynthesis; cob(II)yrinate a,c-diamide from sirohydrochlorin (anaerobic route): step 6/10. Its function is as follows. Catalyzes the methylation of C-1 in cobalt-precorrin-5B to form cobalt-precorrin-6A. The protein is Cobalt-precorrin-5B C(1)-methyltransferase of Brucella anthropi (strain ATCC 49188 / DSM 6882 / CCUG 24695 / JCM 21032 / LMG 3331 / NBRC 15819 / NCTC 12168 / Alc 37) (Ochrobactrum anthropi).